A 389-amino-acid polypeptide reads, in one-letter code: Probable nitrate transporter NarT (389 aa).

12 consecutive transmembrane segments (helical) span residues 14–34, 45–65, 69–89, 97–117, 139–159, 161–181, 211–231, 246–266, 268–288, 294–314, 331–351, and 353–373; these read TLSL…MPFI, ISII…PFGY, IVGA…PIFF, GMLM…SVGV, GNIG…IIGW, TTVR…FIFG, WYFI…NYLV, GVFI…GDKF, AVKV…ILGI, LFTV…GLIF, IVSM…TYVA, and LTGS…IALF.

This sequence belongs to the major facilitator superfamily. Nitrate/nitrite porter (TC 2.A.1.8) family.

It is found in the cell membrane. In terms of biological role, probably required for nitrate uptake under anoxic conditions. Also possibly involved in excretion of nitrite produced by the dissimilatory reduction of nitrate. The chain is Probable nitrate transporter NarT (narT) from Staphylococcus aureus (strain JH9).